A 943-amino-acid polypeptide reads, in one-letter code: Calcium-activated chloride channel regulator 2 (943 aa).

A signal peptide spans 1 to 31; sequence MTQRSIAGPICNLKFVTLLVALSSELPFLGA. Topologically, residues 32–901 are extracellular; the sequence is GVQLQDNGYN…SDPVPARDYL (870 aa). The tract at residues 54–205 is metalloprotease domain; the sequence is NQNLISNIKE…CSSDITGIFV (152 aa). N-linked (GlcNAc...) asparagine glycosylation is found at Asn-74 and Asn-150. His-164 provides a ligand contact to Zn(2+). Glu-165 is a catalytic residue. His-168 and Asp-175 together coordinate Zn(2+). N-linked (GlcNAc...) asparagine glycosylation is present at Asn-231. One can recognise a VWFA domain in the interval 311 to 483; the sequence is VVCLVLDVSS…NSMIDAFSRI (173 aa). N-linked (GlcNAc...) asparagine glycans are attached at residues Asn-522 and Asn-822. The helical transmembrane segment at 902-922 threads the bilayer; it reads ILKGVLTAMGLIGIICLIIVV. The Cytoplasmic segment spans residues 923-943; it reads THHTLSRKKRADKKENGTKLL.

This sequence belongs to the CLCR family. Post-translationally, the 141 kDa mature form is autoproteolytically cleaved by the metalloprotease domain, producing a 109 kDa form and a 35 kDa form. The cleavage is necessary for calcium-activated chloride channel (CaCC) activation activity. In terms of processing, N-glycosylated. As to expression, expressed in cornea, skin, vagina, esophagus, and larynx (at protein level). Expressed in trachea and mammary gland. Weakly expressed in testis and kidney. Highly expressed in corneal epithelium, colon and trachea. Moderately expressed in brain, urogenital organs, bladder, uterus and prostate. Highly expressed in tissues containing stratified epithelium including cornea, esophagus, larynx, skin and vagina than those tissues which contain only epithelial monolayers. Expressed in normal breast epithelium but not in breast cancer. Highly expressed during epithelial stratification. Expressed in endothelial cells of lung. Expressed selectively in endothelia of small pulmonary arteries, arterioles, and subpleural and interlobular venules.

Its subcellular location is the cell membrane. It is found in the basal cell membrane. It localises to the cell junction. The protein localises to the secreted. Plays a role in modulating chloride current across the plasma membrane in a calcium-dependent manner, and cell adhesion. Involved in basal cell adhesion and/or stratification of squamous epithelia. May act as a tumor suppressor in breast and colorectal cancer. Plays a key role for cell adhesion in the beginning stages of lung metastasis via the binding to ITGB4. This is Calcium-activated chloride channel regulator 2 (CLCA2) from Homo sapiens (Human).